The sequence spans 140 residues: Methylglyoxal synthase (140 aa).

An MGS-like domain is found at 1–140; that stretch reads MKIALIAHDR…HDQDSNPINL (140 aa). Residues His8, Lys12, 34–37, and 54–55 each bind substrate; these read TGTT and SG. Asp60 acts as the Proton donor/acceptor in catalysis. His87 contacts substrate.

It belongs to the methylglyoxal synthase family.

The catalysed reaction is dihydroxyacetone phosphate = methylglyoxal + phosphate. Functionally, catalyzes the formation of methylglyoxal from dihydroxyacetone phosphate. This Latilactobacillus sakei subsp. sakei (strain 23K) (Lactobacillus sakei subsp. sakei) protein is Methylglyoxal synthase.